Here is a 36-residue protein sequence, read N- to C-terminus: Avenin-A (36 aa).

This sequence belongs to the gliadin/glutenin family. In terms of assembly, monomer.

It localises to the vacuole. The protein resides in the aleurone grain. Seed storage protein. Serves as a source of nitrogen, carbon, and sulfur for the young developing seedling. This chain is Avenin-A, found in Avena sativa (Oat).